The following is a 488-amino-acid chain: MTKNNETGWNLDNSYTTLPQSFYTEIPPTPVSSPELVKLNHSLAISLGLTPEELKKEAEIAIFAGNGLPEGAHPLAQAYAGHQFGHFNMLGDGRALLIGEQITPSGERFDIQLKGSGPTPYSRRGDGRAALGPMLREYIISEAMYALDIPTTRSLAVVTTGEPTYRETKLPGAILTRVASSHIRVGTFQYAAARGSIEDLKSLADYTIKRHYPEIESHENRYTALLQEVIKRQASLIAKWQLAGFIHGVMNTDNITISGETIDYGPCAFMDNYDQGTVFSSIDTQGRYAYGNQPYMAAWDLARLAESLIPILHEDEEEALKIAQDEISKFSVQYEKQWFLGMKKKLGLFSNEEQDHSLIEQLLKMMEKYKADYTNTFRSLTLDAIENTALFESPEFKEWYKLWQSRLDRQEQSKENAYEMMKNNNPSIIPRNHRVEEALEAAVTNDDYSVMEKLLEALSNPYAYSTDQEEYCAPPAPTNRPYRTFCGT.

ATP contacts are provided by G91, G93, R94, K114, D126, G127, R177, and R184. Catalysis depends on D253, which acts as the Proton acceptor. N254 and D263 together coordinate Mg(2+). Residue D263 participates in ATP binding.

Belongs to the SELO family. Requires Mg(2+) as cofactor. Mn(2+) is required as a cofactor.

It catalyses the reaction L-seryl-[protein] + ATP = 3-O-(5'-adenylyl)-L-seryl-[protein] + diphosphate. The enzyme catalyses L-threonyl-[protein] + ATP = 3-O-(5'-adenylyl)-L-threonyl-[protein] + diphosphate. It carries out the reaction L-tyrosyl-[protein] + ATP = O-(5'-adenylyl)-L-tyrosyl-[protein] + diphosphate. The catalysed reaction is L-histidyl-[protein] + UTP = N(tele)-(5'-uridylyl)-L-histidyl-[protein] + diphosphate. It catalyses the reaction L-seryl-[protein] + UTP = O-(5'-uridylyl)-L-seryl-[protein] + diphosphate. The enzyme catalyses L-tyrosyl-[protein] + UTP = O-(5'-uridylyl)-L-tyrosyl-[protein] + diphosphate. Nucleotidyltransferase involved in the post-translational modification of proteins. It can catalyze the addition of adenosine monophosphate (AMP) or uridine monophosphate (UMP) to a protein, resulting in modifications known as AMPylation and UMPylation. This is Protein nucleotidyltransferase YdiU from Bacillus cereus (strain ATCC 14579 / DSM 31 / CCUG 7414 / JCM 2152 / NBRC 15305 / NCIMB 9373 / NCTC 2599 / NRRL B-3711).